The chain runs to 322 residues: Quinolinate synthase (322 aa).

Iminosuccinate contacts are provided by H38 and S55. C100 serves as a coordination point for [4Fe-4S] cluster. Residues 126-128 (YIN) and S143 contribute to the iminosuccinate site. [4Fe-4S] cluster is bound at residue C186. Iminosuccinate is bound by residues 212 to 214 (HPE) and T229. C279 serves as a coordination point for [4Fe-4S] cluster.

The protein belongs to the quinolinate synthase family. Type 2 subfamily. It depends on [4Fe-4S] cluster as a cofactor.

The protein resides in the cytoplasm. The catalysed reaction is iminosuccinate + dihydroxyacetone phosphate = quinolinate + phosphate + 2 H2O + H(+). It functions in the pathway cofactor biosynthesis; NAD(+) biosynthesis; quinolinate from iminoaspartate: step 1/1. Its function is as follows. Catalyzes the condensation of iminoaspartate with dihydroxyacetone phosphate to form quinolinate. This is Quinolinate synthase from Aquifex aeolicus (strain VF5).